The primary structure comprises 74 residues: NAD(P)H-quinone oxidoreductase subunit O (74 aa).

It belongs to the complex I NdhO subunit family. As to quaternary structure, NDH-1 can be composed of about 15 different subunits; different subcomplexes with different compositions have been identified which probably have different functions.

It localises to the cellular thylakoid membrane. It catalyses the reaction a plastoquinone + NADH + (n+1) H(+)(in) = a plastoquinol + NAD(+) + n H(+)(out). The catalysed reaction is a plastoquinone + NADPH + (n+1) H(+)(in) = a plastoquinol + NADP(+) + n H(+)(out). NDH-1 shuttles electrons from an unknown electron donor, via FMN and iron-sulfur (Fe-S) centers, to quinones in the respiratory and/or the photosynthetic chain. The immediate electron acceptor for the enzyme in this species is believed to be plastoquinone. Couples the redox reaction to proton translocation, and thus conserves the redox energy in a proton gradient. Cyanobacterial NDH-1 also plays a role in inorganic carbon-concentration. In Synechococcus sp. (strain RCC307), this protein is NAD(P)H-quinone oxidoreductase subunit O.